The sequence spans 236 residues: Chorionic somatomammotropin hormone 1 (236 aa).

The first 36 residues, 1–36 (MAPASSHRGHQWICDLVRGSCLLLLLVVSNLLLCQG), serve as a signal peptide directing secretion. N-linked (GlcNAc...) asparagine glycosylation occurs at Asn89. Cystine bridges form between Cys98-Cys214 and Cys231-Cys236.

This sequence belongs to the somatotropin/prolactin family.

Its subcellular location is the secreted. In Bos taurus (Bovine), this protein is Chorionic somatomammotropin hormone 1 (CSH1).